Consider the following 492-residue polypeptide: Cysteine--tRNA ligase (492 aa).

Zn(2+) is bound at residue Cys-27. The short motif at 29–39 is the 'HIGH' region element; that stretch reads VTVYDLCHLGH. 3 residues coordinate Zn(2+): Cys-211, His-236, and Glu-240. A 'KMSKS' region motif is present at residues 268–272; the sequence is KMSKS. An ATP-binding site is contributed by Lys-271.

This sequence belongs to the class-I aminoacyl-tRNA synthetase family. Monomer. The cofactor is Zn(2+).

It localises to the cytoplasm. The catalysed reaction is tRNA(Cys) + L-cysteine + ATP = L-cysteinyl-tRNA(Cys) + AMP + diphosphate. This chain is Cysteine--tRNA ligase, found in Prochlorococcus marinus (strain MIT 9515).